The primary structure comprises 544 residues: CTP synthase (544 aa).

Positions 1–265 (MTKFIFVTGG…DDIICEHLDL (265 aa)) are amidoligase domain. Residue Ser13 participates in CTP binding. Ser13 serves as a coordination point for UTP. ATP contacts are provided by residues 14 to 19 (SLGKGI) and Asp71. Positions 71 and 139 each coordinate Mg(2+). Residues 146 to 148 (DIE), 186 to 191 (KTKPTQ), and Lys222 each bind CTP. UTP-binding positions include 186–191 (KTKPTQ) and Lys222. Residues 290–542 (NIAMVGKYVD…VEAALAYQAD (253 aa)) form the Glutamine amidotransferase type-1 domain. An L-glutamine-binding site is contributed by Gly351. Cys378 functions as the Nucleophile; for glutamine hydrolysis in the catalytic mechanism. Residues 379–382 (LGMQ), Glu402, and Arg469 each bind L-glutamine. Catalysis depends on residues His515 and Glu517.

The protein belongs to the CTP synthase family. In terms of assembly, homotetramer.

The enzyme catalyses UTP + L-glutamine + ATP + H2O = CTP + L-glutamate + ADP + phosphate + 2 H(+). It carries out the reaction L-glutamine + H2O = L-glutamate + NH4(+). It catalyses the reaction UTP + NH4(+) + ATP = CTP + ADP + phosphate + 2 H(+). It functions in the pathway pyrimidine metabolism; CTP biosynthesis via de novo pathway; CTP from UDP: step 2/2. Allosterically activated by GTP, when glutamine is the substrate; GTP has no effect on the reaction when ammonia is the substrate. The allosteric effector GTP functions by stabilizing the protein conformation that binds the tetrahedral intermediate(s) formed during glutamine hydrolysis. Inhibited by the product CTP, via allosteric rather than competitive inhibition. Its function is as follows. Catalyzes the ATP-dependent amination of UTP to CTP with either L-glutamine or ammonia as the source of nitrogen. Regulates intracellular CTP levels through interactions with the four ribonucleotide triphosphates. The polypeptide is CTP synthase (Laribacter hongkongensis (strain HLHK9)).